A 547-amino-acid chain; its full sequence is MAAKEVLFAGDARAKMLTGVNILANAVKVTLGPKGRNVVLDKSFGSPVITKDGVSVAKEIELEDKFENMGAQMVKEVASKANDAAGDGTTTATVLAQSIVNEGLKAVAAGMNPMDLKRGIDKAVIAAVAELKALSVPCSDTKAIAQVGTISANSDKEIGDIIAQAMEKVGRNSGVITVEEGQSLENELDVVEGMQFDRGYLSPYFINSPEKGTVELDNPFILLVDKKISNIRELLPTLEAVAKASKPLLIIAEDLEGEALATLVVNNMRGIVKVSAVKAPGFGDRRKAMLQDIAVLTGGTVISEEIGLELEKATVEDLGTAKRVIITKDDTTIIDGAGEEAGINGRVSQIKAQIEEATSDYDKEKLQERMAKLAGGVAVIKVGAATEMEMKEKKDRVEDALNATRAAVEEGVVPGGGVALVRAASKLVDLVGDNEDQNHGIKVALRAMEAPLRQIVTNAGDEASVVINAVKAGSGNFGYNAATGEYNDMIEMGILDPTKVTRSALQFAGSIAGLMITTEAMVAEIPKDDSAPDMGGMGGMGGMGGMM.

Residues 30–33, lysine 51, 87–91, glycine 416, 480–482, and aspartate 496 each bind ATP; these read TLGP, DGTTT, and NAA.

This sequence belongs to the chaperonin (HSP60) family. Forms a cylinder of 14 subunits composed of two heptameric rings stacked back-to-back. Interacts with the co-chaperonin GroES.

The protein localises to the cytoplasm. The catalysed reaction is ATP + H2O + a folded polypeptide = ADP + phosphate + an unfolded polypeptide.. Functionally, together with its co-chaperonin GroES, plays an essential role in assisting protein folding. The GroEL-GroES system forms a nano-cage that allows encapsulation of the non-native substrate proteins and provides a physical environment optimized to promote and accelerate protein folding. This Pseudoalteromonas translucida (strain TAC 125) protein is Chaperonin GroEL.